A 731-amino-acid chain; its full sequence is Probable G-protein coupled receptor 149 (731 aa).

Residues 1–35 (MSLFLSNLSTNDSSLWKENHNSTDLLNPPGTLNIY) are Extracellular-facing. 3 N-linked (GlcNAc...) asparagine glycosylation sites follow: Asn7, Asn11, and Asn21. The chain crosses the membrane as a helical span at residues 36–56 (LFCLTCLMTFAALVGSIYSLI). Residues 57 to 69 (SLLKMQNRTVVSM) lie on the Cytoplasmic side of the membrane. The helical transmembrane segment at 70–90 (LVASWSVDDLMSVLSVTIFMF) threads the bilayer. Topologically, residues 91-109 (LQWPNEVPGYFQFLCTTSA) are extracellular. The cysteines at positions 105 and 182 are disulfide-linked. The helical transmembrane segment at 110–132 (LMYLCQGLSSNLKATLLVSYNFY) threads the bilayer. At 133 to 155 (TMHRGVGSQTASRRSGQVLGVVL) the chain is on the cytoplasmic side. Residues 156-176 (TVWAASLLLSALPLCGWGAFV) form a helical membrane-spanning segment. Residues 177 to 189 (RTPWGCLVDCSSS) lie on the Extracellular side of the membrane. A helical transmembrane segment spans residues 190-210 (YVLFLSIVYALAFGLLVGLSV). Topologically, residues 211–310 (PLTHRLLCSE…SFTVSVAQKR (100 aa)) are cytoplasmic. The disordered stretch occupies residues 234-271 (RGASIPGTPPTAGRVVSLSPEDAPGPSLRRSGGCSPSS). Residues 311–331 (FALILALTKVVLWLPMMMHMV) form a helical membrane-spanning segment. Residues 332–342 (VQNVVGFQSLP) lie on the Extracellular side of the membrane. Residues 343–363 (LETFSFLLTLLATTVTPVFVL) traverse the membrane as a helical segment. Residues 364 to 731 (SKRWTHLPCG…RKREEESKGS (368 aa)) are Cytoplasmic-facing. Positions 475–526 (NTDITEAKQDSNNKKDAFSDKTGGDINYEETTFSEGPERRLSHEESQKPDLS) are disordered. Basic and acidic residues-rich tracts occupy residues 479–497 (TEAKQDSNNKKDAFSDKTG) and 510–526 (GPERRLSHEESQKPDLS).

It belongs to the G-protein coupled receptor 1 family.

It is found in the cell membrane. Its function is as follows. Orphan receptor. The chain is Probable G-protein coupled receptor 149 (GPR149) from Homo sapiens (Human).